The sequence spans 412 residues: Regulator of microtubule dynamics protein 2 (412 aa).

A helical transmembrane segment spans residues 9–28 (LLLGIMAGTAGISLLVLWYH). Position 51 is a phosphoserine (Ser-51). A coiled-coil region spans residues 72 to 110 (QLQILEKLNELLTNVEELKEEIKFLKETIPKLEECIQDE). Residue Ser-121 is modified to Phosphoserine. Residues 122–153 (PQHRARKKKTTTTTVQRPATSNSSEEAESEGG) are disordered. Position 141 is a phosphothreonine (Thr-141). Tyr-154 carries the phosphotyrosine modification. A phosphothreonine mark is found at Thr-156 and Thr-159.

It belongs to the RMDN family. As to quaternary structure, interacts with microtubules.

The protein resides in the membrane. It is found in the cytoplasm. It localises to the cytoskeleton. The protein localises to the spindle. Its subcellular location is the spindle pole. The chain is Regulator of microtubule dynamics protein 2 (Rmdn2) from Rattus norvegicus (Rat).